A 233-amino-acid chain; its full sequence is MVTTQKAVVLLSGGLDSSTVLFRAKALGYACYALSFDYGQRHRRELEAAIAIATSAGVVEHQILPLNLRLWGGSALTDLSIDLPRDRDLATMSQEIPVTYVPARNTIFLSVALAYAEALEARSVHIGVNALDYSGYPDCRPDYIAAMQEVYRLGTKQGREGQPIEIVTPLIDLHKTDIIRLGHGYGVPWEKTWSCYSDGQQACGRCDACRLRLAAFAELGLVDPLPYAVHPPL.

11–21 contributes to the ATP binding site; the sequence is LSGGLDSSTVL. Zn(2+)-binding residues include Cys-195, Cys-203, Cys-206, and Cys-209.

This sequence belongs to the QueC family. It depends on Zn(2+) as a cofactor.

The enzyme catalyses 7-carboxy-7-deazaguanine + NH4(+) + ATP = 7-cyano-7-deazaguanine + ADP + phosphate + H2O + H(+). It participates in purine metabolism; 7-cyano-7-deazaguanine biosynthesis. In terms of biological role, catalyzes the ATP-dependent conversion of 7-carboxy-7-deazaguanine (CDG) to 7-cyano-7-deazaguanine (preQ(0)). The chain is 7-cyano-7-deazaguanine synthase from Thermosynechococcus vestitus (strain NIES-2133 / IAM M-273 / BP-1).